The sequence spans 322 residues: Ribosomal RNA small subunit methyltransferase H (322 aa).

S-adenosyl-L-methionine contacts are provided by residues 42-44, Asp62, Phe86, Asp107, and Gln114; that span reads GGH.

It belongs to the methyltransferase superfamily. RsmH family.

The protein resides in the cytoplasm. It carries out the reaction cytidine(1402) in 16S rRNA + S-adenosyl-L-methionine = N(4)-methylcytidine(1402) in 16S rRNA + S-adenosyl-L-homocysteine + H(+). In terms of biological role, specifically methylates the N4 position of cytidine in position 1402 (C1402) of 16S rRNA. In Janthinobacterium sp. (strain Marseille) (Minibacterium massiliensis), this protein is Ribosomal RNA small subunit methyltransferase H.